The sequence spans 335 residues: Acetyl-coenzyme A carboxylase carboxyl transferase subunit alpha (335 aa).

The CoA carboxyltransferase C-terminal domain occupies 48-308; it reads TLELKVDALR…KEILIEELKA (261 aa).

The protein belongs to the AccA family. In terms of assembly, acetyl-CoA carboxylase is a heterohexamer composed of biotin carboxyl carrier protein (AccB), biotin carboxylase (AccC) and two subunits each of ACCase subunit alpha (AccA) and ACCase subunit beta (AccD).

The protein resides in the cytoplasm. It catalyses the reaction N(6)-carboxybiotinyl-L-lysyl-[protein] + acetyl-CoA = N(6)-biotinyl-L-lysyl-[protein] + malonyl-CoA. It functions in the pathway lipid metabolism; malonyl-CoA biosynthesis; malonyl-CoA from acetyl-CoA: step 1/1. Functionally, component of the acetyl coenzyme A carboxylase (ACC) complex. First, biotin carboxylase catalyzes the carboxylation of biotin on its carrier protein (BCCP) and then the CO(2) group is transferred by the carboxyltransferase to acetyl-CoA to form malonyl-CoA. In Pelodictyon phaeoclathratiforme (strain DSM 5477 / BU-1), this protein is Acetyl-coenzyme A carboxylase carboxyl transferase subunit alpha.